The following is a 142-amino-acid chain: MGKTRGMGAGRKLKQLRITQRWADKHYKKSNRGNEWKKPFACSSHAKGIVLEKIGIEAKQPNSAIRKCARVQLIKNGKKIAAFVPNDGCLNYIEENDEVLIAGFGRKGHAVGDIPGVRFKVVKVSGVSLLALFKEKKEKPRS.

The residue at position 61 (P61) is a Hydroxyproline.

This sequence belongs to the universal ribosomal protein uS12 family.

The protein is Small ribosomal subunit protein uS12z (RPS23A) of Arabidopsis thaliana (Mouse-ear cress).